Here is a 331-residue protein sequence, read N- to C-terminus: Olfactory receptor 10S1 (331 aa).

The Extracellular portion of the chain corresponds to 1 to 38; the sequence is MTSRSVCEKMTMTTENPNQTVVSHFFLEGLRYTAKHSS. An N-linked (GlcNAc...) asparagine glycan is attached at Asn-18. A helical membrane pass occupies residues 39–59; sequence LFFLLFLLIYSITVAGNLLIL. The Cytoplasmic portion of the chain corresponds to 60–67; the sequence is LTVGSDSH. A helical transmembrane segment spans residues 68–88; it reads LSLPMYHFLGHLSFLDACLST. At 89-113 the chain is on the extracellular side; that stretch reads VTVPKVMAGLLTLDGKVISFEGCAV. Cys-111 and Cys-203 are disulfide-bonded. Residues 114 to 134 traverse the membrane as a helical segment; that stretch reads QLYCFHFLASTECFLYTVMAY. Over 135–153 the chain is Cytoplasmic; the sequence is DRYLAICQPLHYPVAMNRR. Residues 154–174 traverse the membrane as a helical segment; that stretch reads MCAEMAGITWAIGATHAAIHT. At 175–211 the chain is on the extracellular side; that stretch reads SLTFRLLYCGPCHIAYFFCDIPPVLKLACTDTTINEL. A helical transmembrane segment spans residues 212–231; it reads VMLASIGIVAAGCLILIVIS. The Cytoplasmic segment spans residues 232 to 251; that stretch reads YIFIVAAVLRIRTAQGRQRA. Residues 252–272 form a helical membrane-spanning segment; sequence FSPCTAQLTGVLLYYVPPVCI. Topologically, residues 273–283 are extracellular; the sequence is YLQPRSSEAGA. The helical transmembrane segment at 284–304 threads the bilayer; it reads GAPAVFYTIVTPMLNPFIYTL. Topologically, residues 305 to 331 are cytoplasmic; the sequence is RNKEVKHALQRLLCSSFRESTAGSPPP.

Belongs to the G-protein coupled receptor 1 family.

It is found in the cell membrane. Odorant receptor. The sequence is that of Olfactory receptor 10S1 (OR10S1) from Homo sapiens (Human).